Reading from the N-terminus, the 346-residue chain is D-alanine--D-alanine ligase (346 aa).

One can recognise an ATP-grasp domain in the interval 133 to 327; it reads KLYAKSVGVK…ALADQISLEK (195 aa). 159 to 211 lines the ATP pocket; sequence LSFPCIIKPARLGSSIGISIVKDEKDLEYAKDVGFEFDNDLVVEEFKNNIKEY. Mg(2+) contacts are provided by Asp284, Glu296, and Asn298.

This sequence belongs to the D-alanine--D-alanine ligase family. The cofactor is Mg(2+). It depends on Mn(2+) as a cofactor.

The protein resides in the cytoplasm. The enzyme catalyses 2 D-alanine + ATP = D-alanyl-D-alanine + ADP + phosphate + H(+). The protein operates within cell wall biogenesis; peptidoglycan biosynthesis. Cell wall formation. The sequence is that of D-alanine--D-alanine ligase from Campylobacter jejuni subsp. jejuni serotype O:2 (strain ATCC 700819 / NCTC 11168).